The primary structure comprises 302 residues: Phospho-N-acetylmuramoyl-pentapeptide-transferase (302 aa).

10 consecutive transmembrane segments (helical) span residues 1 to 21 (MIAA…NLFR), 42 to 62 (GTPT…GVLS), 67 to 87 (VILT…FLSI), 101 to 121 (ALLQ…ETAV), 123 to 143 (FFGI…IVIV), 154 to 174 (GLDG…WFFL), 178 to 198 (GFSE…LIFN), 204 to 224 (IFMG…VSVL), 229 to 249 (FYLI…ILQI), and 279 to 299 (IVAV…EVFG).

This sequence belongs to the glycosyltransferase 4 family. MraY subfamily. Mg(2+) is required as a cofactor.

The protein localises to the cell inner membrane. It catalyses the reaction UDP-N-acetyl-alpha-D-muramoyl-L-alanyl-gamma-D-glutamyl-meso-2,6-diaminopimeloyl-D-alanyl-D-alanine + di-trans,octa-cis-undecaprenyl phosphate = di-trans,octa-cis-undecaprenyl diphospho-N-acetyl-alpha-D-muramoyl-L-alanyl-D-glutamyl-meso-2,6-diaminopimeloyl-D-alanyl-D-alanine + UMP. It functions in the pathway cell wall biogenesis; peptidoglycan biosynthesis. Catalyzes the initial step of the lipid cycle reactions in the biosynthesis of the cell wall peptidoglycan: transfers peptidoglycan precursor phospho-MurNAc-pentapeptide from UDP-MurNAc-pentapeptide onto the lipid carrier undecaprenyl phosphate, yielding undecaprenyl-pyrophosphoryl-MurNAc-pentapeptide, known as lipid I. The protein is Phospho-N-acetylmuramoyl-pentapeptide-transferase of Thermotoga neapolitana (strain ATCC 49049 / DSM 4359 / NBRC 107923 / NS-E).